Here is a 255-residue protein sequence, read N- to C-terminus: Diphthine synthase (255 aa).

S-adenosyl-L-methionine is bound by residues Leu9, Asp85, Val88, 113-114 (SI), Leu164, Ala207, and His232.

The protein belongs to the diphthine synthase family. In terms of assembly, homodimer.

The enzyme catalyses 2-[(3S)-amino-3-carboxypropyl]-L-histidyl-[translation elongation factor 2] + 3 S-adenosyl-L-methionine = diphthine-[translation elongation factor 2] + 3 S-adenosyl-L-homocysteine + 3 H(+). It functions in the pathway protein modification; peptidyl-diphthamide biosynthesis. Its function is as follows. S-adenosyl-L-methionine-dependent methyltransferase that catalyzes the trimethylation of the amino group of the modified target histidine residue in translation elongation factor 2 (EF-2), to form an intermediate called diphthine. The three successive methylation reactions represent the second step of diphthamide biosynthesis. This is Diphthine synthase from Methanococcus maripaludis (strain C7 / ATCC BAA-1331).